The following is a 296-amino-acid chain: Nucleotide-binding protein Spy49_0545 (296 aa).

Residue 13–20 (GMSGAGKT) coordinates ATP. 63-66 (DMRS) contributes to the GTP binding site.

Belongs to the RapZ-like family.

Displays ATPase and GTPase activities. This Streptococcus pyogenes serotype M49 (strain NZ131) protein is Nucleotide-binding protein Spy49_0545.